Consider the following 504-residue polypeptide: Activin receptor type-1 (504 aa).

The N-terminal stretch at 1-16 is a signal peptide; sequence MALPVLLLLLALPSRS. The Extracellular segment spans residues 17–119; sequence VQDEELKLNE…EAAGYSMETL (103 aa). Asn94 carries N-linked (GlcNAc...) asparagine glycosylation. A helical transmembrane segment spans residues 120–140; sequence IIVILAPVVVLVIFSVVAVLI. Over 141–504 the chain is Cytoplasmic; that stretch reads IRRIQKNHME…NSLDKLKADC (364 aa). Residues 173–202 enclose the GS domain; sequence STLADLLDHSCTSGSGSGLPFLVQRTVARQ. The 295-residue stretch at 203-497 folds into the Protein kinase domain; that stretch reads ITLVECVGKG…KTLTKIDNSL (295 aa). Residues 209 to 217 and Lys230 each bind ATP; that span reads VGKGRYGEV. Asp331 (proton acceptor) is an active-site residue.

It belongs to the protein kinase superfamily. TKL Ser/Thr protein kinase family. TGFB receptor subfamily. It depends on Mg(2+) as a cofactor. The cofactor is Mn(2+).

Its subcellular location is the membrane. The catalysed reaction is L-threonyl-[receptor-protein] + ATP = O-phospho-L-threonyl-[receptor-protein] + ADP + H(+). It carries out the reaction L-seryl-[receptor-protein] + ATP = O-phospho-L-seryl-[receptor-protein] + ADP + H(+). Functionally, on ligand binding, forms a receptor complex consisting of two type II and two type I transmembrane serine/threonine kinases. Type II receptors phosphorylate and activate type I receptors which autophosphorylate, then bind and activate SMAD transcriptional regulators. Receptor for activin. This chain is Activin receptor type-1 (ACVR1), found in Gallus gallus (Chicken).